The sequence spans 495 residues: MAKNKIRVRYAPSPTGHLHIGNARTALFNYLFARHNKGTFVLRIEDTDTKRNIADGEKSQMDNLEWLGIDWDEGPDKPGKYGPYRQSERKDIYKPLIQELLDKDLAYESFMTEEELQAQREEQKARGEAPRYVYEYEGMSKEEIKKAQDEARAKGLKPVVRIRVPHNKTYEWDDIVKGKISFLSDTIGGDFVIQKRDGMPTYNFAVVVDDHLMEITHVLRGDDHVANTPKQLVVYEAFGWKAPEFGHMSLIINTETGKKLSKRDETVLQFIEQYRELGYLPDAMFNFITLLGWSPVGESEIFNKQEFIKMFDAKRLSKSPAAFDGKKLEWINNQYVKAAKEDEIMDSSLRQLIKAGKVQADPDAYTIEWARKLISLYKQQMSYTGQIVEMADVFFNEPPVLSEDAKKELADESAAIVLKEFAERVKDLPIFDAVEIQNTIRSIQKDTKIKGRKLYMPIRIATTREMHGPELAPSIELLGREKALKHLKQTLEEMN.

The short motif at 12-22 is the 'HIGH' region element; the sequence is PSPTGHLHIGN. The 'KMSKS' region signature appears at 259–263; it reads KLSKR. Lys262 serves as a coordination point for ATP.

The protein belongs to the class-I aminoacyl-tRNA synthetase family. Glutamate--tRNA ligase type 1 subfamily. Monomer.

It localises to the cytoplasm. It carries out the reaction tRNA(Glu) + L-glutamate + ATP = L-glutamyl-tRNA(Glu) + AMP + diphosphate. Catalyzes the attachment of glutamate to tRNA(Glu) in a two-step reaction: glutamate is first activated by ATP to form Glu-AMP and then transferred to the acceptor end of tRNA(Glu). This Ligilactobacillus salivarius (strain UCC118) (Lactobacillus salivarius) protein is Glutamate--tRNA ligase.